Here is a 665-residue protein sequence, read N- to C-terminus: Lamin-A (665 aa).

Residue M1 is modified to N-acetylmethionine. Positions 1 to 29 (METPGQKRATRSTHTPLSPTRITRLQEKE) are head. The residue at position 18 (S18) is a Phosphoserine. The 357-residue stretch at 27 to 383 (EKEDLQGLND…KLLEGEEERL (357 aa)) folds into the IF rod domain. The interval 30–66 (DLQGLNDRLAVYIDKVRSLELENARLRLRITESEDVI) is coil 1A. The interval 67–76 (SREVTGIKSA) is linker 1. Positions 77–214 (YETELADARK…SIYNEEMRET (138 aa)) are coil 1B. Residues 215 to 238 (KRRHETRLVEVDNGRQREFESKLA) are linker 2. A coil 2 region spans residues 239–383 (DALHELRAQH…KLLEGEEERL (145 aa)). Disordered stretches follow at residues 381–441 (ERLR…SVEE), 550–581 (DDED…GEYN), and 602–641 (ASQG…LGES). Residues 384-664 (RLSPSPNTQK…AQVAPQNCSI (281 aa)) are tail. At S388 the chain carries Phosphoserine. Low complexity predominate over residues 399–411 (IASHSGAHISSSA). The short motif at 413–418 (KRRRLE) is the Nuclear localization signal element. The LTD domain occupies 425 to 542 (SSFTQHARTT…EEVAMRKLVR (118 aa)). The segment covering 427–436 (FTQHARTTGK) has biased composition (polar residues). Over residues 605–630 (GSGLVTGSSGSSSSSVTLTRTYRSTG) the composition is skewed to low complexity. C662 carries the cysteine methyl ester modification. Residue C662 is the site of S-farnesyl cysteine attachment. A propeptide spans 663–665 (SIM) (removed in mature form).

This sequence belongs to the intermediate filament family. As to quaternary structure, homodimer. Lamin dimers then assemble into dimeric head-to-tail polymers. Ultimately, two head-to-tail polymers assemble laterally into a protofilament with a uniformly shaped rod of 3.5 nm in diameter. Phosphorylation plays a key role in lamin organization, subcellular localization and nuclear envelope disintegration. Phosphorylation by CDK1 at Ser-18 at the onset of mitosis drives lamin disassembly and nuclear envelope breakdown.

It localises to the nucleus lamina. It is found in the nucleus envelope. The protein resides in the nucleus. Its subcellular location is the nucleoplasm. The protein localises to the nucleus matrix. Its function is as follows. Lamins are intermediate filament proteins that assemble into a filamentous meshwork, and which constitute the major components of the nuclear lamina, a fibrous layer on the nucleoplasmic side of the inner nuclear membrane. Lamins provide a framework for the nuclear envelope, bridging the nuclear envelope and chromatin, thereby playing an important role in nuclear assembly, chromatin organization, nuclear membrane and telomere dynamics. The structural integrity of the lamina is strictly controlled by the cell cycle, as seen by the disintegration and formation of the nuclear envelope in prophase and telophase, respectively. This chain is Lamin-A (lmna), found in Xenopus laevis (African clawed frog).